Here is a 58-residue protein sequence, read N- to C-terminus: DNA-directed RNA polymerases I, II, and III subunit RPABC4 (58 aa).

Zn(2+)-binding residues include cysteine 19, cysteine 22, cysteine 36, and cysteine 39. The C4-type zinc-finger motif lies at 19–39; sequence CGECHTENEIKSRDPIRCREC.

This sequence belongs to the archaeal Rpo12/eukaryotic RPC10 RNA polymerase subunit family. Component of the RNA polymerase I (Pol I), RNA polymerase II (Pol II) and RNA polymerase III (Pol III) complexes consisting of at least 13, 12 and 17 subunits, respectively. Pol I complex consists of a ten-subunit catalytic core composed of POLR1A/RPA1, POLR1B/RPA2, POLR1C/RPAC1, POLR1D/RPAC2, POLR1H/RPA12, POLR2E/RPABC1, POLR2F/RPABC2, POLR2H/RPABC3, POLR2K/RPABC4 and POLR2L/RPABC5; a mobile stalk subunit POLR1F/RPA43 protruding from the core and additional subunits homologous to general transcription factors POLR1E/RPA49 and POLR1G/RPA34. Part of Pol I pre-initiation complex (PIC), in which Pol I core assembles with RRN3 and promoter-bound UTBF and SL1/TIF-IB complex. Pol II complex contains a ten-subunit catalytic core composed of POLR2A/RPB1, POLR2B/RPB2, POLR2C/RPB3, POLR2I/RPB9, POLR2J/RPB11, POLR2E/RPABC1, POLR2F/RPABC2, POLR2H/RPABC3, POLR2K/RPABC4 and POLR2L/RPABC5 and a mobile stalk composed of two subunits POLR2D/RPB4 and POLR2G/RPB7. Part of Pol II(G) complex, in which Pol II core associates with an additional subunit POLR2M; unlike conventional Pol II, Pol II(G) functions as a transcriptional repressor. Part of TBP-based Pol II pre-initiation complex (PIC), in which Pol II core assembles with general transcription factors and other specific initiation factors including GTF2E1, GTF2E2, GTF2F1, GTF2F2, TCEA1, ERCC2, ERCC3, GTF2H2, GTF2H3, GTF2H4, GTF2H5, GTF2A1, GTF2A2, GTF2B and TBP; this large multi-subunit PIC complex mediates DNA unwinding and targets Pol II core to the transcription start site where the first phosphodiester bond forms. Pol III complex consists of a ten-subunit catalytic core composed of POLR3A/RPC1, POLR3B/RPC2, POLR1C/RPAC1, POLR1D/RPAC2, POLR3K/RPC10, POLR2E/RPABC1, POLR2F/RPABC2, POLR2H/RPABC3, POLR2K/RPABC4 and POLR2L/RPABC5; a mobile stalk composed of two subunits POLR3H/RPC8 and CRCP/RPC9, protruding from the core and functioning primarily in transcription initiation; and additional subunits homologous to general transcription factors of the RNA polymerase II machinery, POLR3C/RPC3-POLR3F/RPC6-POLR3G/RPC7 heterotrimer required for transcription initiation and POLR3D/RPC4-POLR3E/RPC5 heterodimer involved in both transcription initiation and termination.

It localises to the nucleus. The protein localises to the nucleolus. Its function is as follows. DNA-dependent RNA polymerase catalyzes the transcription of DNA into RNA using the four ribonucleoside triphosphates as substrates. Common component of RNA polymerases I, II and III which synthesize ribosomal RNA precursors, mRNA precursors and many functional non-coding RNAs, and a small RNAs, such as 5S rRNA and tRNAs, respectively. The protein is DNA-directed RNA polymerases I, II, and III subunit RPABC4 (POLR2K) of Bos taurus (Bovine).